Here is a 78-residue protein sequence, read N- to C-terminus: ATP synthase subunit c (78 aa).

2 consecutive transmembrane segments (helical) span residues 11–31 and 53–73; these read FIGA…VGHV and LFIG…VALL.

It belongs to the ATPase C chain family. In terms of assembly, F-type ATPases have 2 components, F(1) - the catalytic core - and F(0) - the membrane proton channel. F(1) has five subunits: alpha(3), beta(3), gamma(1), delta(1), epsilon(1). F(0) has four main subunits: a(1), b(1), b'(1) and c(10-14). The alpha and beta chains form an alternating ring which encloses part of the gamma chain. F(1) is attached to F(0) by a central stalk formed by the gamma and epsilon chains, while a peripheral stalk is formed by the delta, b and b' chains.

Its subcellular location is the cell inner membrane. F(1)F(0) ATP synthase produces ATP from ADP in the presence of a proton or sodium gradient. F-type ATPases consist of two structural domains, F(1) containing the extramembraneous catalytic core and F(0) containing the membrane proton channel, linked together by a central stalk and a peripheral stalk. During catalysis, ATP synthesis in the catalytic domain of F(1) is coupled via a rotary mechanism of the central stalk subunits to proton translocation. In terms of biological role, key component of the F(0) channel; it plays a direct role in translocation across the membrane. A homomeric c-ring of between 10-14 subunits forms the central stalk rotor element with the F(1) delta and epsilon subunits. The sequence is that of ATP synthase subunit c from Jannaschia sp. (strain CCS1).